Consider the following 544-residue polypeptide: CTP synthase (544 aa).

The amidoligase domain stretch occupies residues 1-267 (MAKFVFVTGG…CRQVLDVLSL (267 aa)). A CTP-binding site is contributed by Ser-13. Ser-13 is a UTP binding site. ATP-binding positions include 14–19 (SIGKGI) and Asp-71. Residues Asp-71 and Glu-141 each coordinate Mg(2+). Residues 148 to 150 (DIE), 188 to 193 (KTKPTQ), and Lys-224 each bind CTP. Residues 188–193 (KTKPTQ) and Lys-224 each bind UTP. Residues 292–534 (KVALVGKYVQ…IQAASQRLPQ (243 aa)) form the Glutamine amidotransferase type-1 domain. Gly-354 contacts L-glutamine. Cys-381 acts as the Nucleophile; for glutamine hydrolysis in catalysis. L-glutamine contacts are provided by residues 382 to 385 (LGMQ), Glu-405, and Arg-462. Residues His-507 and Glu-509 contribute to the active site.

This sequence belongs to the CTP synthase family. In terms of assembly, homotetramer.

The enzyme catalyses UTP + L-glutamine + ATP + H2O = CTP + L-glutamate + ADP + phosphate + 2 H(+). The catalysed reaction is L-glutamine + H2O = L-glutamate + NH4(+). It carries out the reaction UTP + NH4(+) + ATP = CTP + ADP + phosphate + 2 H(+). The protein operates within pyrimidine metabolism; CTP biosynthesis via de novo pathway; CTP from UDP: step 2/2. Its activity is regulated as follows. Allosterically activated by GTP, when glutamine is the substrate; GTP has no effect on the reaction when ammonia is the substrate. The allosteric effector GTP functions by stabilizing the protein conformation that binds the tetrahedral intermediate(s) formed during glutamine hydrolysis. Inhibited by the product CTP, via allosteric rather than competitive inhibition. Catalyzes the ATP-dependent amination of UTP to CTP with either L-glutamine or ammonia as the source of nitrogen. Regulates intracellular CTP levels through interactions with the four ribonucleotide triphosphates. This Synechococcus sp. (strain RCC307) protein is CTP synthase.